A 96-amino-acid chain; its full sequence is UPF0235 protein Acid345_4205 (96 aa).

It belongs to the UPF0235 family.

In Koribacter versatilis (strain Ellin345), this protein is UPF0235 protein Acid345_4205.